Reading from the N-terminus, the 430-residue chain is Long-chain specific acyl-CoA dehydrogenase, mitochondrial (430 aa).

Residues 1–30 constitute a mitochondrion transit peptide; the sequence is MATRLLRGSLRLWGGLCAPRLPTASRCSHS. K42 is subject to N6-acetyllysine. S54 and S55 each carry phosphoserine. N6-acetyllysine; alternate is present on residues K66 and K81. 2 positions are modified to N6-succinyllysine; alternate: K66 and K81. N6-acetyllysine occurs at positions 92 and 95. An N6-succinyllysine modification is found at K165. FAD-binding positions include 170 to 179 and 203 to 205; these read IAMTEPGAGS and FIT. S179 lines the substrate pocket. Residue 227–228 participates in substrate binding; sequence AH. At K240 the chain carries N6-succinyllysine. K254 and K279 each carry N6-acetyllysine; alternate. N6-succinyllysine; alternate is present on residues K254 and K279. Substrate contacts are provided by residues Y282 and 289 to 292; that span reads PQER. The active-site Proton acceptor is E291. R317 serves as a coordination point for FAD. At K318 the chain carries N6-acetyllysine. An N6-acetyllysine; alternate modification is found at K322. Residue K322 is modified to N6-succinyllysine; alternate. Q328 serves as a coordination point for FAD. An N6-acetyllysine modification is found at K358. At S362 the chain carries Phosphoserine. 385 to 389 contacts FAD; the sequence is QLHGG. 412-413 is a substrate binding site; it reads GG. Residue 414–416 coordinates FAD; the sequence is TNE.

The protein belongs to the acyl-CoA dehydrogenase family. As to quaternary structure, homotetramer. FAD is required as a cofactor. In terms of processing, acetylation at Lys-318 and Lys-322 in proximity of the cofactor-binding sites strongly reduces catalytic activity. These sites are deacetylated by SIRT3.

Its subcellular location is the mitochondrion matrix. It catalyses the reaction a long-chain 2,3-saturated fatty acyl-CoA + oxidized [electron-transfer flavoprotein] + H(+) = a long-chain (2E)-enoyl-CoA + reduced [electron-transfer flavoprotein]. It carries out the reaction hexanoyl-CoA + oxidized [electron-transfer flavoprotein] + H(+) = (2E)-hexenoyl-CoA + reduced [electron-transfer flavoprotein]. The catalysed reaction is octanoyl-CoA + oxidized [electron-transfer flavoprotein] + H(+) = (2E)-octenoyl-CoA + reduced [electron-transfer flavoprotein]. The enzyme catalyses decanoyl-CoA + oxidized [electron-transfer flavoprotein] + H(+) = (2E)-decenoyl-CoA + reduced [electron-transfer flavoprotein]. It catalyses the reaction dodecanoyl-CoA + oxidized [electron-transfer flavoprotein] + H(+) = (2E)-dodecenoyl-CoA + reduced [electron-transfer flavoprotein]. It carries out the reaction tetradecanoyl-CoA + oxidized [electron-transfer flavoprotein] + H(+) = (2E)-tetradecenoyl-CoA + reduced [electron-transfer flavoprotein]. The catalysed reaction is oxidized [electron-transfer flavoprotein] + hexadecanoyl-CoA + H(+) = (2E)-hexadecenoyl-CoA + reduced [electron-transfer flavoprotein]. The enzyme catalyses octadecanoyl-CoA + oxidized [electron-transfer flavoprotein] + H(+) = (2E)-octadecenoyl-CoA + reduced [electron-transfer flavoprotein]. It catalyses the reaction eicosanoyl-CoA + oxidized [electron-transfer flavoprotein] + H(+) = (2E)-eicosenoyl-CoA + reduced [electron-transfer flavoprotein]. It carries out the reaction docosanoyl-CoA + oxidized [electron-transfer flavoprotein] + H(+) = (2E)-docosenoyl-CoA + reduced [electron-transfer flavoprotein]. The catalysed reaction is tetracosanoyl-CoA + oxidized [electron-transfer flavoprotein] + H(+) = (2E)-tetracosenoyl-CoA + reduced [electron-transfer flavoprotein]. The enzyme catalyses (5E)-tetradecenoyl-CoA + oxidized [electron-transfer flavoprotein] + H(+) = (2E,5E)-tetradecadienoyl-CoA + reduced [electron-transfer flavoprotein]. It catalyses the reaction (5Z)-tetradecenoyl-CoA + oxidized [electron-transfer flavoprotein] + H(+) = (2E,5Z)-tetradecadienoyl-CoA + reduced [electron-transfer flavoprotein]. It carries out the reaction oxidized [electron-transfer flavoprotein] + (9Z)-octadecenoyl-CoA + H(+) = (2E,9Z)-octadecadienoyl-CoA + reduced [electron-transfer flavoprotein]. It participates in lipid metabolism; mitochondrial fatty acid beta-oxidation. Long-chain specific acyl-CoA dehydrogenase is one of the acyl-CoA dehydrogenases that catalyze the first step of mitochondrial fatty acid beta-oxidation, an aerobic process breaking down fatty acids into acetyl-CoA and allowing the production of energy from fats. The first step of fatty acid beta-oxidation consists in the removal of one hydrogen from C-2 and C-3 of the straight-chain fatty acyl-CoA thioester, resulting in the formation of trans-2-enoyl-CoA. Among the different mitochondrial acyl-CoA dehydrogenases, long-chain specific acyl-CoA dehydrogenase can act on saturated and unsaturated acyl-CoAs with 6 to 24 carbons with a preference for 8 to 18 carbons long primary chains. The protein is Long-chain specific acyl-CoA dehydrogenase, mitochondrial of Sus scrofa (Pig).